We begin with the raw amino-acid sequence, 148 residues long: SsrA-binding protein (148 aa).

Over residues 129–142 (ETEKKRDWEREKAR) the composition is skewed to basic and acidic residues. The interval 129–148 (ETEKKRDWEREKARIMRAGT) is disordered.

It belongs to the SmpB family.

It localises to the cytoplasm. Its function is as follows. Required for rescue of stalled ribosomes mediated by trans-translation. Binds to transfer-messenger RNA (tmRNA), required for stable association of tmRNA with ribosomes. tmRNA and SmpB together mimic tRNA shape, replacing the anticodon stem-loop with SmpB. tmRNA is encoded by the ssrA gene; the 2 termini fold to resemble tRNA(Ala) and it encodes a 'tag peptide', a short internal open reading frame. During trans-translation Ala-aminoacylated tmRNA acts like a tRNA, entering the A-site of stalled ribosomes, displacing the stalled mRNA. The ribosome then switches to translate the ORF on the tmRNA; the nascent peptide is terminated with the 'tag peptide' encoded by the tmRNA and targeted for degradation. The ribosome is freed to recommence translation, which seems to be the essential function of trans-translation. This is SsrA-binding protein from Burkholderia orbicola (strain AU 1054).